The sequence spans 505 residues: MKKKLVLIIIDGLGLRLESQGNGFALAKTPVFDRLFQEYPNSLIAASGQEVGLPEGQMGNSEVGHLNIGAGFVVYTGISIINNALKTGKFFENEKFILAFRHSIKTGFPLQIMGLFSPGGVHSHQDHLFALIDFAANFGVKKLNLHLFGDGRDVGPKSIKPWIKMLNLKLKNYEDYKIASISGRFYSMDRDKMFDRVELGYNALLGKAENTFTDPIDYINFQYEKGVSDEFFEPAINLKVNKKDFLADDHPVIFFNFRPDRARQLSHLILQTDLYEQKPKNPIKTDVFVSMMKYEGINCLVAFEEMRVENPLGKLISMAGFRQLRLAETQKYAHVTFFVDGGVELELENSDRILIDSLKVQSYADFPQMSAVEITDKLLEVGQNYDFIIMNFANPDMVGHTGDLKATIKAVEILDFQIGRICKWAEEKNFDFFITADHGNAELTEDENGNPSTKHTTFPVMLISSDKTIKLKSGKLANIAPTILDYLGLDKHPDMDHDSLIIKDK.

Mn(2+)-binding residues include aspartate 11 and serine 61. Serine 61 functions as the Phosphoserine intermediate in the catalytic mechanism. Substrate contacts are provided by residues histidine 122, 152–153, arginine 184, arginine 190, 258–261, and lysine 331; these read RD and RPDR. 5 residues coordinate Mn(2+): aspartate 396, histidine 400, aspartate 437, histidine 438, and histidine 455.

It belongs to the BPG-independent phosphoglycerate mutase family. As to quaternary structure, monomer. The cofactor is Mn(2+).

The catalysed reaction is (2R)-2-phosphoglycerate = (2R)-3-phosphoglycerate. It functions in the pathway carbohydrate degradation; glycolysis; pyruvate from D-glyceraldehyde 3-phosphate: step 3/5. Its function is as follows. Catalyzes the interconversion of 2-phosphoglycerate and 3-phosphoglycerate. This chain is 2,3-bisphosphoglycerate-independent phosphoglycerate mutase, found in Mesomycoplasma hyopneumoniae (strain J / ATCC 25934 / NCTC 10110) (Mycoplasma hyopneumoniae).